Here is a 448-residue protein sequence, read N- to C-terminus: DNA repair protein RadA (448 aa).

The segment at 10 to 27 (CQHCGFTSPKWLGKCVQC) adopts a C4-type zinc-finger fold. 96–103 (GSPGVGKS) provides a ligand contact to ATP. The RadA KNRFG motif signature appears at 253 to 257 (KNRFG). A lon-protease-like region spans residues 351 to 448 (DVFINVSGGI…NVVGKIVEWM (98 aa)).

Belongs to the RecA family. RadA subfamily.

In terms of biological role, DNA-dependent ATPase involved in processing of recombination intermediates, plays a role in repairing DNA breaks. Stimulates the branch migration of RecA-mediated strand transfer reactions, allowing the 3' invading strand to extend heteroduplex DNA faster. Binds ssDNA in the presence of ADP but not other nucleotides, has ATPase activity that is stimulated by ssDNA and various branched DNA structures, but inhibited by SSB. Does not have RecA's homology-searching function. The polypeptide is DNA repair protein RadA (Helicobacter pylori (strain J99 / ATCC 700824) (Campylobacter pylori J99)).